A 787-amino-acid polypeptide reads, in one-letter code: Signal transducer and activator of transcription 5B (787 aa).

Phosphotyrosine is present on Y90. At S128 the chain carries Phosphoserine. Residues 589 to 686 (WNDGAILGFV…EVYSKYYTPV (98 aa)) form the SH2 domain. Y682 carries the post-translational modification Phosphotyrosine. Y699 carries the post-translational modification Phosphotyrosine; by HCK, JAK and PTK6.

The protein belongs to the transcription factor STAT family. Upon activation, forms a homodimer or a heterodimer with a related family member. Binds NR3C1. Interacts with NCOA1. Interacts with NMI. Interacts with SOCS7. Interacts (via SH2 domain) with INSR. Interacts with CPEB3; this inhibits STAT5B-mediated transcriptional activation. Tyrosine phosphorylated in response to signaling via activated KIT, resulting in translocation to the nucleus. Tyrosine phosphorylated in response to signaling via activated FLT3; wild-type FLT3 results in much weaker phosphorylation than constitutively activated mutant FLT3. Alternatively, can be phosphorylated by JAK2. Phosphorylation at Tyr-699 by PTK6 or HCK leads to an increase of its transcriptional activity.

The protein localises to the cytoplasm. It is found in the nucleus. In terms of biological role, carries out a dual function: signal transduction and activation of transcription. Mediates cellular responses to the cytokine KITLG/SCF and other growth factors. Binds to the GAS element and activates PRL-induced transcription. Positively regulates hematopoietic/erythroid differentiation. This is Signal transducer and activator of transcription 5B (STAT5B) from Sus scrofa (Pig).